A 701-amino-acid chain; its full sequence is DNA ligase (701 aa).

NAD(+) contacts are provided by residues 58-62, 107-108, and glutamate 138; these read DYEYD and SL. Residue lysine 140 is the N6-AMP-lysine intermediate of the active site. Residues arginine 161, glutamate 199, lysine 323, and lysine 347 each coordinate NAD(+). Zn(2+) contacts are provided by cysteine 441, cysteine 444, cysteine 459, and cysteine 464. A BRCT domain is found at 621 to 701; that stretch reads EKRGKLAGLN…EEFLKMIGQQ (81 aa).

Belongs to the NAD-dependent DNA ligase family. LigA subfamily. Requires Mg(2+) as cofactor. Mn(2+) is required as a cofactor.

The catalysed reaction is NAD(+) + (deoxyribonucleotide)n-3'-hydroxyl + 5'-phospho-(deoxyribonucleotide)m = (deoxyribonucleotide)n+m + AMP + beta-nicotinamide D-nucleotide.. In terms of biological role, DNA ligase that catalyzes the formation of phosphodiester linkages between 5'-phosphoryl and 3'-hydroxyl groups in double-stranded DNA using NAD as a coenzyme and as the energy source for the reaction. It is essential for DNA replication and repair of damaged DNA. This chain is DNA ligase, found in Sulfurihydrogenibium azorense (strain DSM 15241 / OCM 825 / Az-Fu1).